Reading from the N-terminus, the 274-residue chain is MMIVYKGEKMQFIRVNTLKINPEVLKKRLENKGVVLEKTFLDYAFEVKKSPFSIGSTPEYLFGYYMPQSISSMIPPIVLNPREDDFILDMCAAPGGKTTHLAQLMKNKGTIVAVEISKTRTKALKSNINRMGVLNTIIINADMRKYKDYLLKNEIFFDKILLDAPCSGNIIKDKNRNVSEEDIKYCSLRQKELIDIGIDLLKKDGELVYSTCSMEVEENEEVIKYILQKRNDVELIIIKANEFKGINIKEGYIKGTLRVFPPNEPFFIAKLRKI.

Residues 91–97 (CAAPGGK), glutamate 115, arginine 120, aspartate 142, aspartate 163, asparagine 169, and arginine 189 each bind S-adenosyl-L-methionine. Cysteine 212 serves as the catalytic Nucleophile.

It belongs to the class I-like SAM-binding methyltransferase superfamily. RsmB/NOP family.

The protein localises to the cytoplasm. It carries out the reaction cytidine(48) in tRNA precursor + S-adenosyl-L-methionine = 5-methylcytidine(48) in tRNA precursor + S-adenosyl-L-homocysteine + H(+). The catalysed reaction is cytidine(40) in tRNA precursor + S-adenosyl-L-methionine = 5-methylcytidine(40) in tRNA precursor + S-adenosyl-L-homocysteine + H(+). Functionally, catalyzes AdoMet-dependent formation of m5C in tRNA. Cytidine residue at either position 40 or position 48 is likely to be methylated. In Methanocaldococcus jannaschii (strain ATCC 43067 / DSM 2661 / JAL-1 / JCM 10045 / NBRC 100440) (Methanococcus jannaschii), this protein is tRNA (cytosine(48)-C(5))-methyltransferase (trm4).